The sequence spans 246 residues: 1-(5-phosphoribosyl)-5-[(5-phosphoribosylamino)methylideneamino] imidazole-4-carboxamide isomerase (246 aa).

Catalysis depends on Asp12, which acts as the Proton acceptor. Asp134 serves as the catalytic Proton donor.

The protein belongs to the HisA/HisF family.

It localises to the cytoplasm. The enzyme catalyses 1-(5-phospho-beta-D-ribosyl)-5-[(5-phospho-beta-D-ribosylamino)methylideneamino]imidazole-4-carboxamide = 5-[(5-phospho-1-deoxy-D-ribulos-1-ylimino)methylamino]-1-(5-phospho-beta-D-ribosyl)imidazole-4-carboxamide. The protein operates within amino-acid biosynthesis; L-histidine biosynthesis; L-histidine from 5-phospho-alpha-D-ribose 1-diphosphate: step 4/9. The protein is 1-(5-phosphoribosyl)-5-[(5-phosphoribosylamino)methylideneamino] imidazole-4-carboxamide isomerase of Haloarcula marismortui (strain ATCC 43049 / DSM 3752 / JCM 8966 / VKM B-1809) (Halobacterium marismortui).